Consider the following 439-residue polypeptide: 23S rRNA (uracil(1939)-C(5))-methyltransferase RlmD (439 aa).

Positions 10-69 constitute a TRAM domain; sequence KTQLNTRHQAVQVERLDHHGAGIAYLKKKPLFIDGALPGEEVVTQLVEEKSKFARGKLIK. [4Fe-4S] cluster is bound by residues Cys-82, Cys-88, Cys-91, and Cys-169. Residues Gln-272, Phe-301, Asn-306, Glu-322, Asn-349, and Asp-370 each contribute to the S-adenosyl-L-methionine site. Cys-396 acts as the Nucleophile in catalysis.

Belongs to the class I-like SAM-binding methyltransferase superfamily. RNA M5U methyltransferase family. RlmD subfamily.

It catalyses the reaction uridine(1939) in 23S rRNA + S-adenosyl-L-methionine = 5-methyluridine(1939) in 23S rRNA + S-adenosyl-L-homocysteine + H(+). Its function is as follows. Catalyzes the formation of 5-methyl-uridine at position 1939 (m5U1939) in 23S rRNA. The polypeptide is 23S rRNA (uracil(1939)-C(5))-methyltransferase RlmD (Vibrio parahaemolyticus serotype O3:K6 (strain RIMD 2210633)).